The primary structure comprises 559 residues: CRISPR-associated exonuclease Cas4/endonuclease Cas1 fusion (559 aa).

The tract at residues 1–198 is CRISPR-associated exonuclease Cas4; that stretch reads MAETDGSIPL…RCSLVGICLP (198 aa). Cys-22 is a [4Fe-4S] cluster binding site. Residues Asp-87 and Asp-100 each coordinate Mn(2+). Residues Cys-187, Cys-190, and Cys-196 each coordinate [4Fe-4S] cluster. Positions 224–559 are CRISPR-associated endonuclease Cas1; sequence LYVQSPKAYV…IPAYPNFVTR (336 aa). Glu-380, His-451, and Glu-466 together coordinate Mn(2+).

It in the N-terminal section; belongs to the CRISPR-associated exonuclease Cas4 family. This sequence in the C-terminal section; belongs to the CRISPR-associated endonuclease Cas1 family. Homodimer, forms a heterotetramer with a Cas2 homodimer. Requires [4Fe-4S] cluster as cofactor. Mg(2+) is required as a cofactor. Mn(2+) serves as cofactor.

It catalyses the reaction exonucleolytic cleavage in the 5'- to 3'-direction to yield nucleoside 3'-phosphates.. Its function is as follows. CRISPR (clustered regularly interspaced short palindromic repeat), is an adaptive immune system that provides protection against mobile genetic elements (viruses, transposable elements and conjugative plasmids). CRISPR clusters contain spacers, sequences complementary to antecedent mobile elements, and target invading nucleic acids. CRISPR clusters are transcribed and processed into CRISPR RNA (crRNA). The Cas4 region acts as a ssDNA exonuclease, while the Cas1 region acts as a dsDNA endonuclease. Involved in the integration of spacer DNA into the CRISPR cassette. The sequence is that of CRISPR-associated exonuclease Cas4/endonuclease Cas1 fusion (cas4-cas1) from Geobacter sulfurreducens (strain ATCC 51573 / DSM 12127 / PCA).